A 330-amino-acid polypeptide reads, in one-letter code: Inactive hydroxysteroid dehydrogenase-like protein 1 (330 aa).

N-acetylalanine is present on alanine 2. Residues alanine 2–alanine 82 are required for mitochondria translocation. NADP(+)-binding positions include glycine 74 to glycine 80, aspartate 125, and lysine 222.

The protein belongs to the short-chain dehydrogenases/reductases (SDR) family. 17-beta-HSD 3 subfamily. As to quaternary structure, interacts with STYXL1.

It is found in the mitochondrion. This chain is Inactive hydroxysteroid dehydrogenase-like protein 1 (Hsdl1), found in Mus musculus (Mouse).